Consider the following 498-residue polypeptide: Ribosomal RNA small subunit methyltransferase G 2 (498 aa).

The methyltransferase G stretch occupies residues 1–230 (MRNGTIRYPG…FQRLGPPTRI (230 aa)). Residues Gly-89, Met-94, and Arg-154 each contribute to the S-adenosyl-L-methionine site. The interval 231-498 (RKETAMKRHG…SQTKHSPAPA (268 aa)) is methyltransferase TrmH family.

In the N-terminal section; belongs to the methyltransferase superfamily. RNA methyltransferase RsmG family. It in the C-terminal section; belongs to the class IV-like SAM-binding methyltransferase superfamily. RNA methyltransferase TrmH family.

The protein resides in the cytoplasm. It carries out the reaction guanosine(527) in 16S rRNA + S-adenosyl-L-methionine = N(7)-methylguanosine(527) in 16S rRNA + S-adenosyl-L-homocysteine. Its function is as follows. Specifically methylates the N7 position of guanine in position 527 of 16S rRNA. The chain is Ribosomal RNA small subunit methyltransferase G 2 (rsmG2) from Syntrophobacter fumaroxidans (strain DSM 10017 / MPOB).